The chain runs to 156 residues: 6,7-dimethyl-8-ribityllumazine synthase (156 aa).

Residues F22, 57-59 (AYE), and 81-83 (TVI) contribute to the 5-amino-6-(D-ribitylamino)uracil site. Residue 86–87 (GT) coordinates (2S)-2-hydroxy-3-oxobutyl phosphate. The active-site Proton donor is H89. F114 lines the 5-amino-6-(D-ribitylamino)uracil pocket. (2S)-2-hydroxy-3-oxobutyl phosphate is bound at residue R128.

Belongs to the DMRL synthase family. As to quaternary structure, forms an icosahedral capsid composed of 60 subunits, arranged as a dodecamer of pentamers.

The catalysed reaction is (2S)-2-hydroxy-3-oxobutyl phosphate + 5-amino-6-(D-ribitylamino)uracil = 6,7-dimethyl-8-(1-D-ribityl)lumazine + phosphate + 2 H2O + H(+). Its pathway is cofactor biosynthesis; riboflavin biosynthesis; riboflavin from 2-hydroxy-3-oxobutyl phosphate and 5-amino-6-(D-ribitylamino)uracil: step 1/2. Functionally, catalyzes the formation of 6,7-dimethyl-8-ribityllumazine by condensation of 5-amino-6-(D-ribitylamino)uracil with 3,4-dihydroxy-2-butanone 4-phosphate. This is the penultimate step in the biosynthesis of riboflavin. The chain is 6,7-dimethyl-8-ribityllumazine synthase from Cronobacter sakazakii (strain ATCC BAA-894) (Enterobacter sakazakii).